A 382-amino-acid polypeptide reads, in one-letter code: MTLQAAGIVTEYNPFHNGHAYQIAQARQKTGADVIVAAMSGNWVQRGEPAIMDKWQRTEAALAGGVDLVVELSGAAALQPAHLFAQGAIAVLATLKCQWLVFGTEHPDMDYDCLMAHLPSDPAIFKRFDQTYASLFQGYLREQTGITLSAANDILGFFYAVANQQQGQPLQLVPLARRGSQHNDTAVMQGTNYASATAIRAASLAGDWATVQPVVPAKTLALLQQESLISWADFWPLLRYQLISAPVTDMRQRYQITEGVEYRLKRAALEATTFADFMRIVKTKRYTYTRLQRQAAYLLLQALPEEMRPQPQYLRVLGYSKQGQAYLHQIKKHVALPLVSRANRDWQKGVGSLDDRLGALRTLVTGIPQDYGRIPIKKPDSE.

ATP-binding positions include 9 to 22 (VTEYNPFHNGHAYQ), glycine 103, asparagine 152, and arginine 177.

It belongs to the TmcAL family.

The protein localises to the cytoplasm. The catalysed reaction is cytidine(34) in elongator tRNA(Met) + acetate + ATP = N(4)-acetylcytidine(34) in elongator tRNA(Met) + AMP + diphosphate. In terms of biological role, catalyzes the formation of N(4)-acetylcytidine (ac(4)C) at the wobble position of elongator tRNA(Met), using acetate and ATP as substrates. First activates an acetate ion to form acetyladenylate (Ac-AMP) and then transfers the acetyl group to tRNA to form ac(4)C34. The protein is tRNA(Met) cytidine acetate ligase of Levilactobacillus brevis (strain ATCC 367 / BCRC 12310 / CIP 105137 / JCM 1170 / LMG 11437 / NCIMB 947 / NCTC 947) (Lactobacillus brevis).